Consider the following 468-residue polypeptide: 3-isopropylmalate dehydratase large subunit (468 aa).

Residues cysteine 346, cysteine 406, and cysteine 409 each coordinate [4Fe-4S] cluster.

The protein belongs to the aconitase/IPM isomerase family. LeuC type 1 subfamily. In terms of assembly, heterodimer of LeuC and LeuD. The cofactor is [4Fe-4S] cluster.

It catalyses the reaction (2R,3S)-3-isopropylmalate = (2S)-2-isopropylmalate. It participates in amino-acid biosynthesis; L-leucine biosynthesis; L-leucine from 3-methyl-2-oxobutanoate: step 2/4. Functionally, catalyzes the isomerization between 2-isopropylmalate and 3-isopropylmalate, via the formation of 2-isopropylmaleate. The sequence is that of 3-isopropylmalate dehydratase large subunit from Cyanothece sp. (strain PCC 7425 / ATCC 29141).